A 180-amino-acid polypeptide reads, in one-letter code: Pituitary tumor-transforming gene 1 protein-interacting protein (180 aa).

Residues 1-32 (MAPGVARGPTPYWRLRLGGAALLLLLIPVAAA) form the signal peptide. The Extracellular portion of the chain corresponds to 33–96 (QEPPGAACSQ…RWGVCWVNFE (64 aa)). The PSI domain occupies 39-92 (ACSQNTNKTCEECLKNVSCLWCNTNKACLDYPVTSVLPPASLCKLSSARWGVCW). Residues Asn45 and Asn54 are each glycosylated (N-linked (GlcNAc...) asparagine). A helical membrane pass occupies residues 97 to 117 (ALIITMSVVGGTLLLGIAICC). At 118–180 (CCCCRRKRSR…ENPYARFENN (63 aa)) the chain is on the cytoplasmic side. The stretch at 130 to 165 (DRSEEKAMREREERRIRQEERRAEMKTRHDEIRKKY) forms a coiled coil. The segment at 131 to 157 (RSEEKAMREREERRIRQEERRAEMKTR) is disordered. Position 174 is a phosphotyrosine (Tyr174).

Interacts with PTTG1. As to expression, ubiquitous.

Its subcellular location is the membrane. The protein localises to the cytoplasm. The protein resides in the nucleus. In terms of biological role, may facilitate PTTG1 nuclear translocation. In Homo sapiens (Human), this protein is Pituitary tumor-transforming gene 1 protein-interacting protein (PTTG1IP).